We begin with the raw amino-acid sequence, 239 residues long: Calcium load-activated calcium channel (239 aa).

Topologically, residues 1 to 55 (MPRKRKCDLRAVRVGLLLGGGGVYGSRFRFTFPGCRALSPWRVRVQRRRCEMSTM) are lumenal. Residues 56–83 (FADTLLIVFISVCTALLAEGITWVLVYR) form a helical membrane-spanning segment. Positions 83–140 (RTDKYKRLKAEVEKQSKKLEKKKETITESAGRQQKKKIERQEEKLKNNNRDLSMVRMK) form a coiled coil. Topologically, residues 84–137 (TDKYKRLKAEVEKQSKKLEKKKETITESAGRQQKKKIERQEEKLKNNNRDLSMV) are cytoplasmic. Serine 111 bears the Phosphoserine mark. A helical membrane pass occupies residues 138–157 (RMKSMFAIGFCFTALMGMFN). Over 158–171 (SIFDGRVVAKLPFT) the chain is Lumenal. The stretch at 172-181 (PLSYIQGLSH) is an intramembrane region. Residues 182–191 (RNLLGDDTTD) lie on the Lumenal side of the membrane. A helical membrane pass occupies residues 192-213 (CSFIFLYILCTMSIRQNIQKIL). The Cytoplasmic portion of the chain corresponds to 214–239 (GLAPSRAATKQAGGFLGPPPPSGKFS). Serine 239 bears the Phosphoserine mark.

It belongs to the TMCO1 family. As to quaternary structure, homodimer and homotetramer. Homodimer under resting conditions; forms homotetramers following ER calcium overload. Component of the GET- and EMC-like (GEL) complex, composed of RAB5IF/OPTI and TMCO1. The GEL complex is part of the multi-pass translocon (MPT) complex, composed of three subcomplexes, the GEL complex (composed of RAB5IF/OPTI and TMCO1), the BOS complex (composed of NCLN/Nicalin, NOMO and TMEM147) and the PAT complex (composed of WDR83OS/Asterix and CCDC47). The MPT complex associates with the SEC61 complex. As to expression, widely expressed in adult and fetal tissues, with higher levels in thymus, prostate, testis and small intestine and lower levels in brain, placenta, lung and kidney. Present in most tissues in the eye, including the trabecular meshwork and retina (at protein level).

The protein resides in the endoplasmic reticulum membrane. It localises to the golgi apparatus membrane. It is found in the mitochondrion membrane. It catalyses the reaction Ca(2+)(in) = Ca(2+)(out). Functionally, endoplasmic reticulum (ER) calcium-selective channel preventing intracellular Ca2(+) stores from overfilling and maintaining calcium homeostasis in the ER. In response to endoplasmic reticulum (ER) Ca2(+) overloading, assembles into a homotetramer, forming a functional calcium-selective channel facilitating Ca2(+) release. Mediates ER Ca2(+) homeostasis in osteoblasts and plays a key role in bone formation, via the CaMKII-HDAC4-RUNX2 signaling axis. Component of the multi-pass translocon (MPT) complex that mediates insertion of multi-pass membrane proteins into the lipid bilayer of membranes. The MPT complex takes over after the SEC61 complex: following membrane insertion of the first few transmembrane segments of proteins by the SEC61 complex, the MPT complex occludes the lateral gate of the SEC61 complex to promote insertion of subsequent transmembrane regions. Within the MPT complex, the GEL subcomplex may mediate insertion of transmembrane regions into the membrane. This is Calcium load-activated calcium channel from Homo sapiens (Human).